The following is a 530-amino-acid chain: Chitin synthase 1 (530 aa).

Residue asparagine 17 is glycosylated (N-linked (GlcNAc...) asparagine). The interval 22–94 (QESSSNLIQQ…QANNNRKVTR (73 aa)) is disordered. Positions 24–56 (SSSNLIQQQQPGTNYARNQQTLSSLRSQKQQAE) are enriched in polar residues. 3 N-linked (GlcNAc...) asparagine glycosylation sites follow: asparagine 118, asparagine 310, and asparagine 474. The next 2 helical transmembrane spans lie at 477–497 (FFAG…GHGF) and 508–528 (IYNV…LSFL).

This sequence belongs to the chitin synthase family. Class II subfamily.

It is found in the cell membrane. It carries out the reaction [(1-&gt;4)-N-acetyl-beta-D-glucosaminyl](n) + UDP-N-acetyl-alpha-D-glucosamine = [(1-&gt;4)-N-acetyl-beta-D-glucosaminyl](n+1) + UDP + H(+). Functionally, polymerizes chitin, a structural polymer of the cell wall and septum, by transferring the sugar moiety of UDP-GlcNAc to the non-reducing end of the growing chitin polymer. The sequence is that of Chitin synthase 1 from Rhizopus delemar (strain RA 99-880 / ATCC MYA-4621 / FGSC 9543 / NRRL 43880) (Mucormycosis agent).